Reading from the N-terminus, the 365-residue chain is Forkhead box protein E4 (365 aa).

The span at M1 to S13 shows a compositional bias: basic and acidic residues. Positions M1–R46 are disordered. The fork-head DNA-binding region spans K48–K142.

As to expression, first expressed at the end of gastrulation (stage 13) in the anterior ectodermal placode. During intermediate neural plate stages (stages 14-16), expression expands to the presumptive nasal ectoderm (PNE) and the presumptive lens ectoderm (PLE). By stages 18-21, expression begins to deplete in the PNE, while intensifying in the PLE so that by late neural stages (stages 22), expression is restricted to the PLE. Throughout tailbud stages (stage 23-31), expression is maintained in the lens placode and lens vesicle. In the maturing lens (stage 32-onwards), expression is restricted to the anterior lens epithelium, where it remains during the tadpole stage. In tadpoles there is additional expression in the ventral midline of the pharynx. Expression continues in the adult eye.

It is found in the nucleus. Probable transcription factor. Mediates lens formation in the embryo by promoting the proliferation of the specified lens ectoderm and suppressing its terminal differentiation. In Xenopus laevis (African clawed frog), this protein is Forkhead box protein E4.